A 539-amino-acid polypeptide reads, in one-letter code: Sorting nexin-27 (539 aa).

The disordered stretch occupies residues 1-40 (MADEDGEGIHPSAPHRNGGGGGGSGLHCAGNGGGGGGGPR). Residues 17–39 (NGGGGGGSGLHCAGNGGGGGGGP) show a composition bias toward gly residues. Residues 41–134 (VVRIVKSESG…ELILTVLSVP (94 aa)) form the PDZ domain. Residues Ser49 and Ser60 each carry the phosphoserine modification. The PX domain maps to 159 to 267 (QAVPISVPTY…EFLSESDENY (109 aa)). The 90-residue stretch at 271–360 (SDVELRVALP…TCLTIRKWLF (90 aa)) folds into the Ras-associating domain. The tract at residues 271 to 360 (SDVELRVALP…TCLTIRKWLF (90 aa)) is FERM-like region F1. An FERM-like region F2 region spans residues 371–419 (NDLAVTYFFHQAVDDVKKGYIKAEEKSYQLQKLHEQRKMVMYLNMLRTC). The segment at 423–523 (NEIIFPHCAC…RVFCELKWRK (101 aa)) is FERM-like region F3.

As to quaternary structure, core component of the SNX27-retromer, a multiprotein complex composed of SNX27, the WASH complex and the retromer complex. Interacts (via the FERM-like regions) with the WASH complex. Interacts with SNX1. Interacts with CYTIP. Interacts with DGKZ. Interacts with MCC. Interacts (via PDZ domain) with a number of target transmembrane proteins (via PDZ-binding motif): ABCC4, ADRB2, ARHGEF7, GRIA1, GRIA2, GRIN1, GRIN2A GRIN2C, KCNJ6, KCNJ9 and SLC2A1/GLUT1. Interacts (via PDZ domains) with SLC9A3; directs SLC9A3 membrane insertion from early endosomes to the plasma membrane. Expressed in cells of hematopoietic origin.

The protein localises to the early endosome membrane. It is found in the cytoplasm. Its subcellular location is the cytosol. Its function is as follows. Involved in the retrograde transport from endosome to plasma membrane, a trafficking pathway that promotes the recycling of internalized transmembrane proteins. Following internalization, endocytosed transmembrane proteins are delivered to early endosomes and recycled to the plasma membrane instead of being degraded in lysosomes. SNX27 specifically binds and directs sorting of a subset of transmembrane proteins containing a PDZ-binding motif at the C-terminus: following interaction with target transmembrane proteins, associates with the retromer complex, preventing entry into the lysosomal pathway, and promotes retromer-tubule based plasma membrane recycling. SNX27 also binds with the WASH complex. Interacts with membranes containing phosphatidylinositol-3-phosphate (PtdIns(3P)). May participate in establishment of natural killer cell polarity. Recruits CYTIP to early endosomes. This chain is Sorting nexin-27 (Snx27), found in Mus musculus (Mouse).